The sequence spans 144 residues: Large ribosomal subunit protein uL13 (144 aa).

Belongs to the universal ribosomal protein uL13 family. As to quaternary structure, part of the 50S ribosomal subunit.

Its function is as follows. This protein is one of the early assembly proteins of the 50S ribosomal subunit, although it is not seen to bind rRNA by itself. It is important during the early stages of 50S assembly. In Moorella thermoacetica (strain ATCC 39073 / JCM 9320), this protein is Large ribosomal subunit protein uL13.